Reading from the N-terminus, the 310-residue chain is Olfactory receptor 2A25 (310 aa).

Over 1 to 24 (MGGNQTSITEFLLLGFPIGPRIQM) the chain is Extracellular. Asn4 carries an N-linked (GlcNAc...) asparagine glycan. The helical transmembrane segment at 25 to 48 (LLFGLFSLFYIFILLGNGTILGLI) threads the bilayer. Residues 49–56 (SLDSRLHT) are Cytoplasmic-facing. Residues 57 to 78 (PMYFFLSHLAVVDIACACSTVP) form a helical membrane-spanning segment. At 79–99 (QMLVNLLHPAKPISFAGCMTQ) the chain is on the extracellular side. Cys96 and Cys188 are oxidised to a cystine. A helical membrane pass occupies residues 100–119 (MFLFLSFAHTECLLLVVMSY). Residues 120–138 (DRYVAICHPLRYSTIMTWK) lie on the Cytoplasmic side of the membrane. A helical membrane pass occupies residues 139 to 157 (VCITLALTSWILGVLLALV). The Extracellular portion of the chain corresponds to 158–195 (HLVLLLPLSFCGPQKLNHFFCEIMAVLKLACADTHINE). The helical transmembrane segment at 196–218 (VMVLAGAVSVLVGAFFSTVISYV) threads the bilayer. Over 219 to 235 (HILCAILKIQSGEGCQK) the chain is Cytoplasmic. The chain crosses the membrane as a helical span at residues 236-258 (AFSICSSHLCVVGLFYGTAIIMY). Residues 259–271 (VEPQYESPKEQKK) lie on the Extracellular side of the membrane. The chain crosses the membrane as a helical span at residues 272 to 291 (YLLLFHSLFNPMLNPLIYSL). The Cytoplasmic portion of the chain corresponds to 292–310 (RNKEVQGTLKRMLEKKRTS).

It belongs to the G-protein coupled receptor 1 family.

It localises to the cell membrane. In terms of biological role, odorant receptor. This chain is Olfactory receptor 2A25 (OR2A25), found in Homo sapiens (Human).